We begin with the raw amino-acid sequence, 316 residues long: Secondary metabolism regulator laeA (316 aa).

Belongs to the methyltransferase superfamily. LaeA methyltransferase family. As to quaternary structure, component of the heterotrimeric velvet complex composed of laeA, veA and velB; VeA acting as a bridging protein between laeA and velB.

Its subcellular location is the nucleus. The catalysed reaction is L-methionyl-[protein] + S-adenosyl-L-methionine = S-methyl-L-methionyl-[protein] + S-adenosyl-L-homocysteine. Its function is as follows. Methyltransferase that performs automethylation. No other methyl-accepting substrate has been identified yet. Component of the velvet transcription factor complex that acts as a global regulator for secondary metabolite gene expression. Controls the biosynthetic gene cluster for beauvericin, a depsipeptide mycotoxin that functions as a virulence determinant. The velvet complex also regulates chromatin structure and transcription of siderophore biosynthetic genes and is required for infection of tomato plants. The velvet complex also governs expression of nitrate metabolism genes. The protein is Secondary metabolism regulator laeA of Fusarium oxysporum f. sp. lycopersici (strain 4287 / CBS 123668 / FGSC 9935 / NRRL 34936) (Fusarium vascular wilt of tomato).